The chain runs to 1232 residues: MVHPVQVGKRTRMSFSRLKEVGQMPNLIEVQLDSYDWFLKEGLQEVFDDINPIQDYTGNLNLEFVGYKLDLDSIKYSVEECKERDSTYAAPLKVKVRLLNKETGEIKEQEVFMGDFPLMTEQGTFIINGAERVIVSQLVRSPGVYYDMTVDKTGSKLFSATVIPNRGAWLEYETDSNNIIYVRIDKTRKLPITILARALGYGTDAEIIEFFGEDERLKATIEKDNTKTREEALLEIYKRLRPGEPPTVDSAESLIESLFFDAKRYDLSRVGRYKFNKKLAIHLRITNQIADQDIVNPQTGEILVQKGEKIDKDKAIEIQSCGINEVYIKIDDKSFKVIGNHFVDIHSLVSFDISDLNIKEYVFYPVLKEILDNYADEESIKEEIRKNIYRLIPKHIIREDIYATINYELALSYDIGYKDDIDHLGNRRLRSVGELLQNQFRIGLSRMERVVKERMTIQDQEVITPQALINIRPVAASIKEFFGSSQLSQFMDQTNPLSELTHKRRLSALGPGGLSRERAGFEVRDVHHSHYGRMCPIETPEGPNIGLINSLATFAKVNEYGFIETPYRRIDPKNKRATNDIVYMTADEEDLYVIARSDEPIDENGYFIDDKVTVRAKEEVLVVPVSEVEYMDISPRQLVSVATAMIPFLENDDASRALMGSNMQRQAVPLLKPQAPIVGTGIEYKAATDSGVLPKAKNAGTVVYVSADEIRVRRDSDGGIDKYKLLKFKRSNQGTCINQRPIVSKGEVVAKETLLADGPSTDLGEIALGKNILMGFITWEGYNYEDAMLISEQLVKEDVFTSIHIEEYEAEARDTKLGPEEITRDIPNVGEEALKDIDERGIIRIGAEVRSGDILVGKVTPKGETELTAEERLLRAIFGEKAREVRDTSLRVPHGEAGIIVDVKIFTRENGDELPPGVNKLVRCYIAQKRKISVGDKMAGRHGNKGVISRVLPEEDMPFLPDGRPLQICLNPLGVPSRMNIGQVLEVHLGLAASKLGWHIATPVFDGAIESDIVDCLRKAGYSEDGKTVLYDGRTGEPFDNRVTVGYMYILKLAHLVDDKIHARSTGPYSLVTQQPLGGKAQFGGQRFGEMEVWALEAYGAAHTLQEILTVKSDDVVGRVKTYEAIVKGENIPEPGVPESFKVLIKELQALCLDVKVLNDDNQEIKLKESVDEDADELEVNIEGTENQPEEKEEKEKEDSDEYDDLREEDVEPDLEELSLDDLDLDDFGDEH.

The segment at serine 1170–histidine 1232 is disordered. Residues valine 1171–valine 1180 show a composition bias toward acidic residues. The segment covering proline 1189–glutamate 1198 has biased composition (basic and acidic residues). The span at aspartate 1199 to histidine 1232 shows a compositional bias: acidic residues.

Belongs to the RNA polymerase beta chain family. The RNAP catalytic core consists of 2 alpha, 1 beta, 1 beta' and 1 omega subunit. When a sigma factor is associated with the core the holoenzyme is formed, which can initiate transcription.

It catalyses the reaction RNA(n) + a ribonucleoside 5'-triphosphate = RNA(n+1) + diphosphate. Its function is as follows. DNA-dependent RNA polymerase catalyzes the transcription of DNA into RNA using the four ribonucleoside triphosphates as substrates. The sequence is that of DNA-directed RNA polymerase subunit beta from Clostridium botulinum (strain Okra / Type B1).